Here is a 577-residue protein sequence, read N- to C-terminus: MSFWLSLIFCFFTFASSSPPDDPVNCEFGNTMCTVTNSYGAFPDRSICKAAKVEYPRTEAELVSIVAAATRAGQKMRVVTRYSHSFPKLVCTDGKDGTLISTKFLNHVVTTNPEAKTLTVESGVTLRQLIEEAAKFDLALPYAPYWWGLTVGGMMGTGAHGSSLWGKGSAVHDYVTEIRLVSPGLASDGYVKVQVLSETIDPEEFRAAKVSLGVLGVISQVTFELQPMFKRSLNYVMRNDSDFGDQAVSFGERHEFADFLWLPSQGKVVYRMDGRVPLNTSGDGLFEFFPFRSQLSLVLAIDRSLEESEESLEDANMKCVRAKLVSSSMFLMSYGVTNNGLIFTGYPVIGMQNHMMSSGSCLDSRQDGLITACPWDPRIKGQFFHQTTFSVSLTNVKSFINDIKALVKIEPKSLCVLEGSNGILIRYVTSSLAFLGKEEKALDFDLTYYRSKNDPLAPRLYEDYIEEIEQMAIFKYNALPHWGKNRNLAFDGAIRKYKNANAFLKVKEKFDSLGLFSTEWTDQILGLKGNVTIVKQGCALEGLCICSEDSHCAPTKGYLCRPGKVYREARVCTRVSS.

The signal sequence occupies residues 1–17 (MSFWLSLIFCFFTFASS). In terms of domain architecture, FAD-binding PCMH-type spans 46–228 (SICKAAKVEY…SQVTFELQPM (183 aa)).

It belongs to the oxygen-dependent FAD-linked oxidoreductase family. FAD serves as cofactor.

It catalyses the reaction L-gulono-1,4-lactone + O2 = L-ascorbate + H2O2 + H(+). It functions in the pathway cofactor biosynthesis; L-ascorbate biosynthesis. Its function is as follows. May be involved in the biosynthesis of ascorbic acid. This is Probable L-gulonolactone oxidase 4 from Arabidopsis thaliana (Mouse-ear cress).